Consider the following 229-residue polypeptide: MDSSDRPSLRQRLSNWGRTDTKPAATDLTAPPNDPSENMELPPLPPVELLGYSHSTRTKIMTTELADEIRNLVPERIKLYRSWQLQYSLEQHGTSLTTLYHRNIPPHGDTARNGFVLAVKNSRGQVFGAYTDQHYHVGGKKFYGNGDCFLWKVKNADSFQAFPYTGENNFVVYCNPHFLSLGGGDGKYGLWLDDALKTGVTYPCATFGNEPLGDEKFDVVAVEVWRVGE.

The interval 1–44 (MDSSDRPSLRQRLSNWGRTDTKPAATDLTAPPNDPSENMELPPL) is disordered. The TLDc domain maps to 59 to 228 (KIMTTELADE…VVAVEVWRVG (170 aa)).

This sequence belongs to the OXR1 family.

Its subcellular location is the mitochondrion. May be involved in protection from oxidative damage. In Yarrowia lipolytica (strain CLIB 122 / E 150) (Yeast), this protein is Oxidation resistance protein 1 (OXR1).